We begin with the raw amino-acid sequence, 209 residues long: ATP-dependent Clp protease proteolytic subunit 2 (209 aa).

Ser-106 serves as the catalytic Nucleophile. The active site involves His-131.

This sequence belongs to the peptidase S14 family. In terms of assembly, fourteen ClpP subunits assemble into 2 heptameric rings which stack back to back to give a disk-like structure with a central cavity, resembling the structure of eukaryotic proteasomes.

It is found in the cytoplasm. The catalysed reaction is Hydrolysis of proteins to small peptides in the presence of ATP and magnesium. alpha-casein is the usual test substrate. In the absence of ATP, only oligopeptides shorter than five residues are hydrolyzed (such as succinyl-Leu-Tyr-|-NHMec, and Leu-Tyr-Leu-|-Tyr-Trp, in which cleavage of the -Tyr-|-Leu- and -Tyr-|-Trp bonds also occurs).. Functionally, cleaves peptides in various proteins in a process that requires ATP hydrolysis. Has a chymotrypsin-like activity. Plays a major role in the degradation of misfolded proteins. The protein is ATP-dependent Clp protease proteolytic subunit 2 of Rhizobium etli (strain ATCC 51251 / DSM 11541 / JCM 21823 / NBRC 15573 / CFN 42).